A 518-amino-acid chain; its full sequence is Serine--tRNA ligase, mitochondrial (518 aa).

Residues 1–34 constitute a mitochondrion transit peptide; it reads MAASIVRRLGPLVAGRGLRLRGGCVCNQSFKRSF. The residue at position 110 (Lys-110) is an N6-acetyllysine. Position 195 is an N6-succinyllysine (Lys-195). 299-301 lines the L-serine pocket; the sequence is TAE. Position 330 to 332 (330 to 332) interacts with ATP; sequence RAE. N6-succinyllysine is present on Lys-337. ATP is bound at residue Val-345. Glu-352 is a binding site for L-serine. 418-421 is an ATP binding site; sequence EVTS. Thr-453 is an L-serine binding site. A disordered region spans residues 497–518; the sequence is PLQYIGPNQPQKPRLPGQPASS.

Belongs to the class-II aminoacyl-tRNA synthetase family. Type-1 seryl-tRNA synthetase subfamily. In terms of assembly, homodimer. The tRNA molecule probably binds across the dimer. Post-translationally, two N-termini starting at positions 35 and 37 have been identified by direct sequencing.

It localises to the mitochondrion matrix. The enzyme catalyses tRNA(Ser) + L-serine + ATP = L-seryl-tRNA(Ser) + AMP + diphosphate + H(+). It carries out the reaction tRNA(Sec) + L-serine + ATP = L-seryl-tRNA(Sec) + AMP + diphosphate + H(+). The protein operates within aminoacyl-tRNA biosynthesis; selenocysteinyl-tRNA(Sec) biosynthesis; L-seryl-tRNA(Sec) from L-serine and tRNA(Sec): step 1/1. Catalyzes the attachment of serine to tRNA(Ser). Is also probably able to aminoacylate tRNA(Sec) with serine, to form the misacylated tRNA L-seryl-tRNA(Sec), which will be further converted into selenocysteinyl-tRNA(Sec). This chain is Serine--tRNA ligase, mitochondrial (SARS2), found in Bos taurus (Bovine).